The sequence spans 341 residues: L-threonine 3-dehydrogenase (341 aa).

Position 38 (C38) interacts with Zn(2+). Active-site charge relay system residues include T40 and H43. Zn(2+) is bound by residues H63, E64, C93, C96, C99, and C107. NAD(+) is bound by residues I175, D195, R200, 262–264, and 286–287; these read LGI and IY.

This sequence belongs to the zinc-containing alcohol dehydrogenase family. Homotetramer. Requires Zn(2+) as cofactor.

It localises to the cytoplasm. It carries out the reaction L-threonine + NAD(+) = (2S)-2-amino-3-oxobutanoate + NADH + H(+). The protein operates within amino-acid degradation; L-threonine degradation via oxydo-reductase pathway; glycine from L-threonine: step 1/2. Functionally, catalyzes the NAD(+)-dependent oxidation of L-threonine to 2-amino-3-ketobutyrate. This chain is L-threonine 3-dehydrogenase, found in Escherichia fergusonii (strain ATCC 35469 / DSM 13698 / CCUG 18766 / IAM 14443 / JCM 21226 / LMG 7866 / NBRC 102419 / NCTC 12128 / CDC 0568-73).